We begin with the raw amino-acid sequence, 545 residues long: Bifunctional purine biosynthesis protein PurH (545 aa).

In terms of domain architecture, MGS-like spans 1–150 (MTNTNRPIRR…KNHATVAIVT (150 aa)).

This sequence belongs to the PurH family.

It carries out the reaction (6R)-10-formyltetrahydrofolate + 5-amino-1-(5-phospho-beta-D-ribosyl)imidazole-4-carboxamide = 5-formamido-1-(5-phospho-D-ribosyl)imidazole-4-carboxamide + (6S)-5,6,7,8-tetrahydrofolate. The enzyme catalyses IMP + H2O = 5-formamido-1-(5-phospho-D-ribosyl)imidazole-4-carboxamide. It functions in the pathway purine metabolism; IMP biosynthesis via de novo pathway; 5-formamido-1-(5-phospho-D-ribosyl)imidazole-4-carboxamide from 5-amino-1-(5-phospho-D-ribosyl)imidazole-4-carboxamide (10-formyl THF route): step 1/1. Its pathway is purine metabolism; IMP biosynthesis via de novo pathway; IMP from 5-formamido-1-(5-phospho-D-ribosyl)imidazole-4-carboxamide: step 1/1. The sequence is that of Bifunctional purine biosynthesis protein PurH from Bifidobacterium longum (strain DJO10A).